The following is a 400-amino-acid chain: Phosphoglycerate kinase (400 aa).

Substrate-binding positions include 19 to 21 (DLN), Arg-38, 61 to 64 (HLGR), Arg-124, and Arg-161. Residues Lys-211, Gly-299, Glu-330, and 356–359 (GGDS) each bind ATP.

It belongs to the phosphoglycerate kinase family. As to quaternary structure, monomer.

Its subcellular location is the cytoplasm. The enzyme catalyses (2R)-3-phosphoglycerate + ATP = (2R)-3-phospho-glyceroyl phosphate + ADP. Its pathway is carbohydrate degradation; glycolysis; pyruvate from D-glyceraldehyde 3-phosphate: step 2/5. The chain is Phosphoglycerate kinase from Frankia casuarinae (strain DSM 45818 / CECT 9043 / HFP020203 / CcI3).